The following is a 65-amino-acid chain: Large ribosomal subunit protein bL35 (65 aa).

Basic residues-rich tracts occupy residues 1-18, 31-44, and 55-65; these read MPKM…KRTA, HRFH…RRQL, and VKRYKKMIPAK. The tract at residues 1 to 65 is disordered; the sequence is MPKMKTKSAA…KRYKKMIPAK (65 aa).

It belongs to the bacterial ribosomal protein bL35 family.

In Limosilactobacillus fermentum (strain NBRC 3956 / LMG 18251) (Lactobacillus fermentum), this protein is Large ribosomal subunit protein bL35.